Here is a 704-residue protein sequence, read N- to C-terminus: Elongation factor G (704 aa).

The tr-type G domain maps to 8–291 (DKVRNIGIMA…AVIDYLASPV (284 aa)). GTP-binding positions include 17–24 (AHIDAGKT), 90–94 (DTPGH), and 144–147 (NKMD).

Belongs to the TRAFAC class translation factor GTPase superfamily. Classic translation factor GTPase family. EF-G/EF-2 subfamily.

It is found in the cytoplasm. Catalyzes the GTP-dependent ribosomal translocation step during translation elongation. During this step, the ribosome changes from the pre-translocational (PRE) to the post-translocational (POST) state as the newly formed A-site-bound peptidyl-tRNA and P-site-bound deacylated tRNA move to the P and E sites, respectively. Catalyzes the coordinated movement of the two tRNA molecules, the mRNA and conformational changes in the ribosome. This is Elongation factor G from Chlorobaculum parvum (strain DSM 263 / NCIMB 8327) (Chlorobium vibrioforme subsp. thiosulfatophilum).